The chain runs to 379 residues: Cyclic dinucleotide synthase CdnE (379 aa).

4 residues coordinate UTP: Q107, S109, D123, and K179. D123 is a binding site for Mg(2+). D193 lines the Mg(2+) pocket. Positions 229, 257, and 274 each coordinate UTP. The Pyrimidine specificity motif (R/Q)xW in donor pocket signature appears at 328–330 (KIF).

Belongs to the CD-NTase family. E02 subfamily. The cofactor is Mg(2+).

It catalyses the reaction 2 UTP = c-di-UMP + 2 diphosphate. The catalysed reaction is UTP + ATP = 3',3'-cUAMP + 2 diphosphate. It carries out the reaction UTP + CTP = cyclic CMP-UMP + 2 diphosphate. Functionally, cyclic nucleotide synthase (second messenger synthase) of a CBASS antivirus system. CBASS (cyclic oligonucleotide-based antiphage signaling system) provides immunity against bacteriophage. The CD-NTase protein synthesizes cyclic nucleotides in response to infection; these serve as specific second messenger signals. The signals activate a diverse range of effectors, leading to bacterial cell death and thus abortive phage infection. The effector protein for this system is membrane protein Cap15. A type I-B(UU) CBASS system. Cyclic dinucleotide synthase that preferentially catalyzes the synthesis of 3',3'-cyclic UMP-UMP (c-di-UMP) and 3',3'-cyclic UMP-AMP, with minor amounts of 3',3'-cyclic UMP-CMP, which are second messengers for cell signal transduction. In terms of biological role, protects E.coli against phage infection. When the CBASS operon (cap15-cdnE) is introduced in E.coli MG1655 it protects against phages T2, T4, T5, T6, SECPhi4, SECPhi6, SECPhi17, SECPhi18 and SECPhi27, but not against phage T7. The polypeptide is Cyclic dinucleotide synthase CdnE (Yersinia aleksiciae).